The sequence spans 129 residues: Phosphoribosyl-AMP cyclohydrolase (129 aa).

Residue aspartate 76 coordinates Mg(2+). Residue cysteine 77 participates in Zn(2+) binding. Residues aspartate 78 and aspartate 80 each contribute to the Mg(2+) site. Residues cysteine 97 and cysteine 104 each coordinate Zn(2+).

The protein belongs to the PRA-CH family. As to quaternary structure, homodimer. Mg(2+) is required as a cofactor. Requires Zn(2+) as cofactor.

The protein localises to the cytoplasm. It catalyses the reaction 1-(5-phospho-beta-D-ribosyl)-5'-AMP + H2O = 1-(5-phospho-beta-D-ribosyl)-5-[(5-phospho-beta-D-ribosylamino)methylideneamino]imidazole-4-carboxamide. Its pathway is amino-acid biosynthesis; L-histidine biosynthesis; L-histidine from 5-phospho-alpha-D-ribose 1-diphosphate: step 3/9. Functionally, catalyzes the hydrolysis of the adenine ring of phosphoribosyl-AMP. The sequence is that of Phosphoribosyl-AMP cyclohydrolase from Leptothrix cholodnii (strain ATCC 51168 / LMG 8142 / SP-6) (Leptothrix discophora (strain SP-6)).